A 488-amino-acid chain; its full sequence is MSFKDLRSFIDHLEANGELKRISYPVDPHLEMTEIADRVLRAQGPALLFENPTNHSMPVLANLFGTPKRVAMALGKDDPLALREVGELLAFLKEPEPPRGFKDAISKIPMFKQALNMPPKTVRNPACQQVVKTGDDVDLTQLPIQHCWPGDVAPLVTWGLTITKGPRKSRQNLGIYRQQLLGKNKLIMRWLSHRGGALDFADFKEQFPGERYPVVVALGSDPVTILGAVTPVPDAMSEYAFAGLLRGERTEVCKALSCDLEVPASSEIILEGYIDPNEMAEEGPYGDHTGYYNETDKFPVFTVTHITHRKDPIYHSTYTGRPPDEPAMLGVALNEVFVPILRKQYPEIIDFYLPPEGCSYRMAVISIRKQYPGHAKRVMMGAWSFLRQFMYTKFIVVVDDDVNCRDWNDVIWAITTRMDPKRDTVMIDNTPIDYLDFASPVVGLGSKMGLDATNKWEGETNREWGTPIVMDPKVKQKIDSIWDELGIS.

A Mn(2+)-binding site is contributed by asparagine 172. Residues 175-177, 189-191, and 194-195 each bind prenylated FMN; these read IYR, RWL, and RG. Glutamate 238 serves as a coordination point for Mn(2+). Aspartate 287 acts as the Proton donor in catalysis.

The protein belongs to the UbiD family. Homohexamer. It depends on prenylated FMN as a cofactor. Requires Mn(2+) as cofactor.

Its subcellular location is the cell membrane. It carries out the reaction a 4-hydroxy-3-(all-trans-polyprenyl)benzoate + H(+) = a 2-(all-trans-polyprenyl)phenol + CO2. Its pathway is cofactor biosynthesis; ubiquinone biosynthesis. Its function is as follows. Catalyzes the decarboxylation of 3-octaprenyl-4-hydroxy benzoate to 2-octaprenylphenol, an intermediate step in ubiquinone biosynthesis. In Shewanella oneidensis (strain ATCC 700550 / JCM 31522 / CIP 106686 / LMG 19005 / NCIMB 14063 / MR-1), this protein is 3-octaprenyl-4-hydroxybenzoate carboxy-lyase.